The primary structure comprises 139 residues: Large-conductance mechanosensitive channel (139 aa).

2 helical membrane passes run 9–29 (AFAVKGNVVDMAVGIIIGAAF) and 79–99 (IQTVIDFVIVAFAIFMGVKAI).

The protein belongs to the MscL family. In terms of assembly, homopentamer.

It is found in the cell inner membrane. Functionally, channel that opens in response to stretch forces in the membrane lipid bilayer. May participate in the regulation of osmotic pressure changes within the cell. The protein is Large-conductance mechanosensitive channel of Pseudomonas putida (strain ATCC 700007 / DSM 6899 / JCM 31910 / BCRC 17059 / LMG 24140 / F1).